The chain runs to 340 residues: Solute-binding protein Dde_0634 (340 aa).

The signal sequence occupies residues 1-29; that stretch reads MKSTFAALLIMVGCLVSGALLTGSEAAAA. Residues Tyr99, Arg172, 210–213, and Tyr235 each bind (indol-3-yl)acetate; that span reads TSLD.

It belongs to the bacterial solute-binding protein 7 family. As to quaternary structure, the complex is comprised of an extracytoplasmic solute-binding protein and a heteromeric permease formed by two transmembrane proteins.

It is found in the periplasm. Its function is as follows. Solute-binding protein that binds indole-3-pyruvate and indole-3-acetate (in vitro). Can also bind D-tryptophan (in vitro), but that is probably not a physiological ligand. Probably part of a tripartite ATP-independent periplasmic (TRAP) transport system that mediates solute transport into the cytoplasm. The sequence is that of Solute-binding protein Dde_0634 from Oleidesulfovibrio alaskensis (strain ATCC BAA-1058 / DSM 17464 / G20) (Desulfovibrio alaskensis).